The sequence spans 445 residues: Putative H/ACA ribonucleoprotein complex subunit 4 (445 aa).

The interval 1–32 (MGKKDKRSKLEGDELAEAQQKGSFQLPSSNET) is disordered. The span at 20–32 (QKGSFQLPSSNET) shows a compositional bias: polar residues. Asp-113 (nucleophile) is an active-site residue. Positions 284–359 (HKRVVVKDSC…IVAKSKRVIM (76 aa)) constitute a PUA domain. A disordered region spans residues 407 to 445 (TDKVKKEQEDKEDEEEEEAPKKKSKKAAKKEVSSSSDSE).

This sequence belongs to the pseudouridine synthase TruB family. Component of the small nucleolar ribonucleoprotein particle containing H/ACA-type snoRNAs (H/ACA snoRNPs).

The protein resides in the nucleus. It localises to the nucleolus. The catalysed reaction is a uridine in RNA = a pseudouridine in RNA. Functionally, plays a central role in ribosomal RNA processing. Probable catalytic subunit of H/ACA small nucleolar ribonucleoprotein (H/ACA snoRNP) complex, which catalyzes pseudouridylation of rRNA. This involves the isomerization of uridine such that the ribose is subsequently attached to C5, instead of the normal N1. Pseudouridine ('psi') residues may serve to stabilize the conformation of rRNAs. The sequence is that of Putative H/ACA ribonucleoprotein complex subunit 4 from Caenorhabditis briggsae.